We begin with the raw amino-acid sequence, 206 residues long: Transcription antitermination protein NusB (206 aa).

Positions 135–206 (ARGEKTSAQE…ETQPPGVNEV (72 aa)) are disordered. Over residues 169-180 (ATPATTPVTTTV) the composition is skewed to low complexity.

It belongs to the NusB family.

Its function is as follows. Involved in transcription antitermination. Required for transcription of ribosomal RNA (rRNA) genes. Binds specifically to the boxA antiterminator sequence of the ribosomal RNA (rrn) operons. In Heliobacterium modesticaldum (strain ATCC 51547 / Ice1), this protein is Transcription antitermination protein NusB.